We begin with the raw amino-acid sequence, 1162 residues long: Cartilage intermediate layer protein 2 (1162 aa).

A signal peptide spans 1–20 (MASPLPLLYLCLAALHLAGA). A disordered region spans residues 23 to 51 (ATPTEEHTSTARGLQGRPPDTGQPSPALE). The 52-residue stretch at 146 to 197 (EAAWGAWGAWGLCSKSCGLGRRLRRRSCQSSSGDTCPGSPQEAQKCVRSRCP) folds into the TSP type-1 domain. Disulfide bonds link C158–C191, C162–C196, C173–C181, and C314–C360. In terms of domain architecture, Ig-like C2-type spans 293–377 (PYLVKHPESR…TVRSRAALLT (85 aa)). N-linked (GlcNAc...) asparagine glycosylation is present at N330.

May be cleaved into 2 chains possibly by a furin-like protease upon or preceding secretion. Post-translationally, N-glycosylated. As to expression, expressed in articulated and meniscal cartilage (at protein level). Also detected in heart, skeletal muscle and brain. Not detected in growth plate cartilage.

The protein resides in the secreted. It is found in the extracellular space. The protein localises to the extracellular matrix. In terms of biological role, may play a role in cartilage scaffolding. This Mus musculus (Mouse) protein is Cartilage intermediate layer protein 2.